Consider the following 138-residue polypeptide: Phospholipase A2 homolog mojave toxin acidic chain (138 aa).

A signal peptide spans Met-1–Tyr-40. 7 cysteine pairs are disulfide-bonded: Cys-42–Cys-131, Cys-44–Cys-60, Cys-59–Cys-111, Cys-65–Cys-138, Cys-66–Cys-104, Cys-73–Cys-97, and Cys-91–Cys-102. Residues Thr-81–Arg-83 constitute a propeptide that is removed on maturation. Gln-84 is modified (pyrrolidone carboxylic acid). The propeptide occupies Asp-120 to Phe-126.

The protein belongs to the phospholipase A2 family. Group II subfamily. D49 sub-subfamily. As to quaternary structure, heterodimer of an acidic and a basic chain. The acidic subunit is non-toxic, without enzymatic activity and comprises 3 peptides that are cross-linked by 5 disulfide bridges. The basic subunit is toxic, has phospholipase A2 activity and is composed of a single chain. Ca(2+) serves as cofactor. As to expression, expressed by the venom gland.

Its subcellular location is the secreted. In terms of biological role, snake venom phospholipase A2 (PLA2) that inhibits neuromuscular transmission by blocking acetylcholine release from the nerve termini. The polypeptide is Phospholipase A2 homolog mojave toxin acidic chain (Crotalus scutulatus scutulatus (Mojave rattlesnake)).